Consider the following 141-residue polypeptide: Nucleoside diphosphate kinase (141 aa).

Positions 11, 59, 87, 93, 104, and 114 each coordinate ATP. His-117 acts as the Pros-phosphohistidine intermediate in catalysis.

Belongs to the NDK family. Homotetramer. The cofactor is Mg(2+).

Its subcellular location is the cytoplasm. The catalysed reaction is a 2'-deoxyribonucleoside 5'-diphosphate + ATP = a 2'-deoxyribonucleoside 5'-triphosphate + ADP. It catalyses the reaction a ribonucleoside 5'-diphosphate + ATP = a ribonucleoside 5'-triphosphate + ADP. Major role in the synthesis of nucleoside triphosphates other than ATP. The ATP gamma phosphate is transferred to the NDP beta phosphate via a ping-pong mechanism, using a phosphorylated active-site intermediate. The polypeptide is Nucleoside diphosphate kinase (Acidovorax ebreus (strain TPSY) (Diaphorobacter sp. (strain TPSY))).